Reading from the N-terminus, the 526-residue chain is Calcium-dependent protein kinase 28 (526 aa).

Positions 1–37 (MQPDPQPHGRGREKAAGAGPRLPPPVTAPSVGRPASV) are disordered. Positions 49 to 307 (YRIGKKLGQG…AHEVLCHPWI (259 aa)) constitute a Protein kinase domain. Residues 55–63 (LGQGQFGTT) and Lys-78 each bind ATP. The Proton acceptor role is filled by Asp-173. An autoinhibitory domain region spans residues 313–343 (APDKPIDSAVLSRLKHFSAMNKLKKMALRVI). EF-hand domains are found at residues 350-385 (EEIG…VGSD), 386-421 (LMEP…MNKL), 422-457 (EREE…FGLS), and 460-491 (HLED…GNAG). Residues Asp-363, Asp-365, Ser-367, Thr-369, Glu-374, Asp-399, Asp-401, Ser-403, Thr-405, Glu-410, Asp-435, Asp-437, Ser-439, Glu-446, Asp-469, Asn-471, Asp-473, Gln-475, and Glu-480 each coordinate Ca(2+).

This sequence belongs to the protein kinase superfamily. Ser/Thr protein kinase family. CDPK subfamily.

The enzyme catalyses L-seryl-[protein] + ATP = O-phospho-L-seryl-[protein] + ADP + H(+). The catalysed reaction is L-threonyl-[protein] + ATP = O-phospho-L-threonyl-[protein] + ADP + H(+). Its activity is regulated as follows. Activated by calcium. Autophosphorylation may play an important role in the regulation of the kinase activity. Its function is as follows. May play a role in signal transduction pathways that involve calcium as a second messenger. This chain is Calcium-dependent protein kinase 28, found in Oryza sativa subsp. japonica (Rice).